A 174-amino-acid chain; its full sequence is 3-hydroxydecanoyl-[acyl-carrier-protein] dehydratase (174 aa).

His73 is a catalytic residue.

It belongs to the thioester dehydratase family. FabA subfamily. As to quaternary structure, homodimer.

The protein resides in the cytoplasm. It catalyses the reaction a (3R)-hydroxyacyl-[ACP] = a (2E)-enoyl-[ACP] + H2O. The catalysed reaction is (3R)-hydroxydecanoyl-[ACP] = (2E)-decenoyl-[ACP] + H2O. The enzyme catalyses (2E)-decenoyl-[ACP] = (3Z)-decenoyl-[ACP]. The protein operates within lipid metabolism; fatty acid biosynthesis. In terms of biological role, necessary for the introduction of cis unsaturation into fatty acids. Catalyzes the dehydration of (3R)-3-hydroxydecanoyl-ACP to E-(2)-decenoyl-ACP and then its isomerization to Z-(3)-decenoyl-ACP. Can catalyze the dehydratase reaction for beta-hydroxyacyl-ACPs with saturated chain lengths up to 16:0, being most active on intermediate chain length. In Teredinibacter turnerae (strain ATCC 39867 / T7901), this protein is 3-hydroxydecanoyl-[acyl-carrier-protein] dehydratase.